Reading from the N-terminus, the 189-residue chain is Movement protein (189 aa).

It belongs to the tombusvirus/aureusvirus movement protein p22 family.

The protein resides in the host membrane. Its function is as follows. Transports viral genome to neighboring plant cells directly through plasmosdesmata, without any budding. The movement protein allows efficient cell to cell propagation, by bypassing the host cell wall barrier. In Artichoke mottled crinkle virus (AMCV), this protein is Movement protein.